A 371-amino-acid chain; its full sequence is Cysteine proteinase 1 (371 aa).

Residues 1 to 18 (MAHRVLLLLSLASAAAVA) form the signal peptide. The propeptide at 19-136 (AAVDAEDPLI…HEAPVLPTDG (118 aa)) is activation peptide. Intrachain disulfides connect cysteine 158-cysteine 208 and cysteine 192-cysteine 241. Residue cysteine 161 is part of the active site. N-linked (GlcNAc...) asparagine glycosylation occurs at asparagine 254. Cysteine 297 and cysteine 354 are oxidised to a cystine. Active-site residues include histidine 303 and asparagine 330.

This sequence belongs to the peptidase C1 family. In terms of tissue distribution, expressed during the late stages of seed ripening, in mature seeds and during germination.

Its function is as follows. Involved in the degradation of the storage protein zein. May play a role in proteolysis during emergencies. This chain is Cysteine proteinase 1 (CCP1), found in Zea mays (Maize).